A 266-amino-acid chain; its full sequence is NAD-capped RNA hydrolase NudC (266 aa).

Residue Arg74 coordinates substrate. Residues Cys103, Cys106, Cys121, and Cys124 each coordinate Zn(2+). Residue Tyr129 coordinates substrate. Residues 130-253 enclose the Nudix hydrolase domain; it reads PRVSPCIIVA…TIARVLIDET (124 aa). Residues Ala163, Glu179, and Glu183 each contribute to the a divalent metal cation site. Positions 164–185 match the Nudix box motif; that stretch reads GFVEAGETLEQCVAREVEEETG. A substrate-binding site is contributed by 197 to 204; sequence QPWAFPSN. Glu224 lines the a divalent metal cation pocket. A substrate-binding site is contributed by Ala246.

The protein belongs to the Nudix hydrolase family. NudC subfamily. Homodimer. Mg(2+) is required as a cofactor. Mn(2+) serves as cofactor. The cofactor is Zn(2+).

The catalysed reaction is a 5'-end NAD(+)-phospho-ribonucleoside in mRNA + H2O = a 5'-end phospho-adenosine-phospho-ribonucleoside in mRNA + beta-nicotinamide D-ribonucleotide + 2 H(+). It carries out the reaction NAD(+) + H2O = beta-nicotinamide D-ribonucleotide + AMP + 2 H(+). It catalyses the reaction NADH + H2O = reduced beta-nicotinamide D-ribonucleotide + AMP + 2 H(+). Functionally, mRNA decapping enzyme that specifically removes the nicotinamide adenine dinucleotide (NAD) cap from a subset of mRNAs by hydrolyzing the diphosphate linkage to produce nicotinamide mononucleotide (NMN) and 5' monophosphate mRNA. The NAD-cap is present at the 5'-end of some mRNAs and stabilizes RNA against 5'-processing. Has preference for mRNAs with a 5'-end purine. Catalyzes the hydrolysis of a broad range of dinucleotide pyrophosphates. The protein is NAD-capped RNA hydrolase NudC of Photobacterium profundum (strain SS9).